Consider the following 303-residue polypeptide: Protein transport protein SEC13-2 (303 aa).

6 WD repeats span residues 7 to 46, 53 to 95, 102 to 143, 149 to 202, 209 to 251, and 261 to 300; these read AHEG…NSSS, GHEG…GKMQ, VHSA…IAST, AHKF…ETYV, GHKD…KKND, and KFEQ…KWEE.

Belongs to the WD repeat SEC13 family. In terms of assembly, the COPII coat is composed of at least 5 proteins: the SEC23/24 complex, the SEC13/31 complex, and the protein SAR1. Component of the nuclear pore complex (NPC). NPC constitutes the exclusive means of nucleocytoplasmic transport. NPCs allow the passive diffusion of ions and small molecules and the active, nuclear transport receptor-mediated bidirectional transport of macromolecules such as proteins, RNAs, ribonucleoparticles (RNPs), and ribosomal subunits across the nuclear envelope. Due to its 8-fold rotational symmetry, all subunits are present with 8 copies or multiples thereof.

Its subcellular location is the cytoplasmic vesicle. It is found in the COPII-coated vesicle membrane. It localises to the endoplasmic reticulum membrane. The protein localises to the nucleus. The protein resides in the nuclear pore complex. Component of the coat protein complex II (COPII) which promotes the formation of transport vesicles from the endoplasmic reticulum (ER). The coat has two main functions, the physical deformation of the endoplasmic reticulum membrane into vesicles and the selection of cargo molecules. It also functions as a component of the nuclear pore complex (NPC). NPC components, collectively referred to as nucleoporins (NUPs), can play the role of both NPC structural components and of docking or interaction partners for transiently associated nuclear transport factors. SEC13 is required for efficient mRNA export from the nucleus to the cytoplasm and for correct nuclear pore biogenesis and distribution. In Candida glabrata (strain ATCC 2001 / BCRC 20586 / JCM 3761 / NBRC 0622 / NRRL Y-65 / CBS 138) (Yeast), this protein is Protein transport protein SEC13-2 (SEC132).